The sequence spans 350 residues: Protein memo-1 homolog (350 aa).

It belongs to the MEMO1 family. In terms of assembly, interacts with rho-1. In terms of tissue distribution, expressed in neuronal and non-neuronal cells in the head and tail, pharyngeal cells, spermatheca, distal tip cells, anchor cell and the intestine.

Functionally, plays a role in the oxidative stress response and the maintenance of longevity by regulating the interaction between GTPase rho-1 and oxidase bli-3. In turn, this serves to modulate bli-3 activity and the control of reactive oxygen species production. May control cell migration by relaying extracellular chemotactic signals to the microtubule cytoskeleton. In Caenorhabditis elegans, this protein is Protein memo-1 homolog.